Consider the following 72-residue polypeptide: Translation initiation factor IF-1 (72 aa).

Positions 1–72 constitute an S1-like domain; it reads MPKEEVLEFP…TKGRITYRFK (72 aa).

It belongs to the IF-1 family. As to quaternary structure, component of the 30S ribosomal translation pre-initiation complex which assembles on the 30S ribosome in the order IF-2 and IF-3, IF-1 and N-formylmethionyl-tRNA(fMet); mRNA recruitment can occur at any time during PIC assembly.

It is found in the cytoplasm. Its function is as follows. One of the essential components for the initiation of protein synthesis. Stabilizes the binding of IF-2 and IF-3 on the 30S subunit to which N-formylmethionyl-tRNA(fMet) subsequently binds. Helps modulate mRNA selection, yielding the 30S pre-initiation complex (PIC). Upon addition of the 50S ribosomal subunit IF-1, IF-2 and IF-3 are released leaving the mature 70S translation initiation complex. The sequence is that of Translation initiation factor IF-1 from Chelativorans sp. (strain BNC1).